A 569-amino-acid polypeptide reads, in one-letter code: Hemin/hemoglobin-binding protein 2 (569 aa).

An N-terminal signal peptide occupies residues 1-28; the sequence is MKKLWKKGLVAFLALTLIFQLIPGFASA. NEAT domains are found at residues 34 to 173, 184 to 307, and 360 to 484; these read KDGG…FKVI, LSDG…ATAA, and LNNH…IKDI. Heme-binding positions include 204–205, Tyr-280, and Tyr-289; that span reads SS. The segment at 307–357 is disordered; it reads ASSYPGSDETPPVVNPGETNPPVTKPDPGTTNPPVTTPPTTPSKPAVVDPK. Residues 502-511 show a composition bias toward polar residues; sequence TGNVASNNNA. The disordered stretch occupies residues 502-537; it reads TGNVASNNNAGPKLAKPDFDDTNSVQKTASKTEKNA. The NXZTN sorting signal motif lies at 536 to 540; it reads NAKTN. A Pentaglycyl murein peptidoglycan amidated threonine modification is found at Thr-539. A propeptide spans 540 to 569 (removed by sortase B); it reads NDSSSMVWYITLFGASFLYLAYRLKRKRLS.

Its subcellular location is the cell surface. It is found in the secreted. It localises to the cell wall. Its activity is regulated as follows. Is overexpressed in mecA, clpC and clpP mutants, suggesting the protein level is controlled by MecA, ClpC and ClpP (at protein level). In terms of biological role, acts as an extracellular and cell wall-bound hemophore; scavenges host heme and hemoglobin from the environment and also serves as a cell wall receptor for both. At low hemin (Hn) and hemoglobin (Hb) concentrations adsorbs Hn/Hb and presumably directs it to membrane transporters. Soluble Hbp2 can probably pass Hn/Hb to cell wall-anchored Hbp2, and both forms can accept Hn/Hb from Hbp1. May be involved in crossing the digestive barrier in infected animals. Binds host hemin. Binds host hemoglobin with affinity in the nanomolar range. This is Hemin/hemoglobin-binding protein 2 from Listeria monocytogenes serovar 1/2a (strain ATCC BAA-679 / EGD-e).